A 513-amino-acid chain; its full sequence is ATP synthase subunit alpha 1 (513 aa).

169–176 (GDRQCGKT) serves as a coordination point for ATP.

Belongs to the ATPase alpha/beta chains family. As to quaternary structure, F-type ATPases have 2 components, CF(1) - the catalytic core - and CF(0) - the membrane proton channel. CF(1) has five subunits: alpha(3), beta(3), gamma(1), delta(1), epsilon(1). CF(0) has three main subunits: a(1), b(2) and c(9-12). The alpha and beta chains form an alternating ring which encloses part of the gamma chain. CF(1) is attached to CF(0) by a central stalk formed by the gamma and epsilon chains, while a peripheral stalk is formed by the delta and b chains.

It is found in the cell inner membrane. It carries out the reaction ATP + H2O + 4 H(+)(in) = ADP + phosphate + 5 H(+)(out). Functionally, produces ATP from ADP in the presence of a proton gradient across the membrane. The alpha chain is a regulatory subunit. The chain is ATP synthase subunit alpha 1 from Burkholderia pseudomallei (strain 1710b).